We begin with the raw amino-acid sequence, 249 residues long: uncharacterized protein (249 aa).

The 68-residue stretch at 4 to 71 folds into the S4 RNA-binding domain; that stretch reads VRINKFLSEA…RKRYIILNKP (68 aa). Catalysis depends on D106, which acts as the Nucleophile.

This sequence belongs to the pseudouridine synthase RsuA family.

The enzyme catalyses a uridine in RNA = a pseudouridine in RNA. This is an uncharacterized protein from Aquifex aeolicus (strain VF5).